We begin with the raw amino-acid sequence, 657 residues long: Glycogen debranching enzyme (657 aa).

Catalysis depends on D336, which acts as the Nucleophile. E371 serves as the catalytic Proton donor. Residues 460–479 (ANGEENRDGTNNNYSNNHGK) form a disordered region.

This sequence belongs to the glycosyl hydrolase 13 family.

The catalysed reaction is Hydrolysis of (1-&gt;6)-alpha-D-glucosidic linkages to branches with degrees of polymerization of three or four glucose residues in limit dextrin.. Its pathway is glycan degradation; glycogen degradation. In terms of biological role, removes maltotriose and maltotetraose chains that are attached by 1,6-alpha-linkage to the limit dextrin main chain, generating a debranched limit dextrin. The polypeptide is Glycogen debranching enzyme (Shigella dysenteriae serotype 1 (strain Sd197)).